The following is a 237-amino-acid chain: Ribose-5-phosphate isomerase A (237 aa).

Substrate is bound by residues 30–33 (SGST), 87–90 (DGAD), and 100–103 (KGGG). Residue glutamate 109 is the Proton acceptor of the active site. Substrate is bound at residue lysine 127.

Belongs to the ribose 5-phosphate isomerase family. As to quaternary structure, homodimer.

It carries out the reaction aldehydo-D-ribose 5-phosphate = D-ribulose 5-phosphate. Its pathway is carbohydrate degradation; pentose phosphate pathway; D-ribose 5-phosphate from D-ribulose 5-phosphate (non-oxidative stage): step 1/1. Catalyzes the reversible conversion of ribose-5-phosphate to ribulose 5-phosphate. The sequence is that of Ribose-5-phosphate isomerase A from Prochlorococcus marinus (strain MIT 9211).